The following is a 360-amino-acid chain: Flavin-dependent trigonelline monooxygenase, oxygenase component (360 aa).

The protein belongs to the bacterial luciferase oxidoreductase family. In terms of assembly, homodimer. The trigonelline monooxygenase is composed of a reductase component TgnA and an oxygenase component TgnB.

It carries out the reaction N-methylnicotinate + FMNH2 + O2 = (Z)-2-((N-methylformamido)methylene)-5-hydroxybutanolactone + FMN + H(+). The enzyme catalyses N-methylnicotinate + FADH2 + O2 = (Z)-2-((N-methylformamido)methylene)-5-hydroxybutanolactone + FAD + H(+). Its function is as follows. Involved in the degradation of the pyridine ring of trigonelline (TG; N-methylnicotinate) into succinate and methylamine as carbon and nitrogen sources, respectively. Catalyzes the insertion of two oxygens, followed by a ring cleavage of trigonelline to yield (Z)-2-((N-methylformamido)methylene)-5-hydroxybutyrolactone (MFMB). It is able to use reduced FMN or FAD. This chain is Flavin-dependent trigonelline monooxygenase, oxygenase component, found in Acinetobacter baylyi (strain ATCC 33305 / BD413 / ADP1).